The following is a 173-amino-acid chain: UPF0598 protein F59C6.12 (173 aa).

It belongs to the UPF0598 family.

This chain is UPF0598 protein F59C6.12, found in Caenorhabditis elegans.